The chain runs to 1156 residues: Nuclear pore-associated protein 1 (1156 aa).

8 disordered regions span residues Met-1 to Ser-60, Glu-155 to Ser-204, Asn-219 to Ala-266, Gly-481 to Ser-515, Thr-680 to Thr-703, Asn-732 to Leu-786, Ser-872 to Ile-915, and Ala-1026 to Pro-1046. Over residues Leu-50–Pro-59 the composition is skewed to basic residues. Over residues Gly-156–Asp-165 the composition is skewed to basic and acidic residues. Composition is skewed to polar residues over residues Pro-179–Asp-197 and Asn-219–Ser-231. Composition is skewed to polar residues over residues Thr-680–Lys-692, Asn-732–Ala-750, Thr-884–Ile-915, and Gly-1028–Pro-1046.

In terms of assembly, associates with the nuclear pore complex (NPC). Testis-specific in adults. In fetal brain expressed only from the paternal allele.

The protein localises to the nucleus. It localises to the nucleoplasm. Its subcellular location is the nucleus inner membrane. Its function is as follows. May be involved in spermatogenesis. The chain is Nuclear pore-associated protein 1 (NPAP1) from Homo sapiens (Human).